The primary structure comprises 179 residues: ATP-dependent protease subunit HslV (179 aa).

Residue threonine 6 is part of the active site. 3 residues coordinate Na(+): serine 164, cysteine 167, and threonine 170.

This sequence belongs to the peptidase T1B family. HslV subfamily. In terms of assembly, a double ring-shaped homohexamer of HslV is capped on each side by a ring-shaped HslU homohexamer. The assembly of the HslU/HslV complex is dependent on binding of ATP.

It is found in the cytoplasm. The catalysed reaction is ATP-dependent cleavage of peptide bonds with broad specificity.. Its activity is regulated as follows. Allosterically activated by HslU binding. Its function is as follows. Protease subunit of a proteasome-like degradation complex believed to be a general protein degrading machinery. The sequence is that of ATP-dependent protease subunit HslV from Listeria innocua serovar 6a (strain ATCC BAA-680 / CLIP 11262).